A 347-amino-acid chain; its full sequence is Iron-sulfur cluster assembly protein SufC (347 aa).

The 247-residue stretch at 100–346 (LEIKDLHAIE…ENKGYSQFLK (247 aa)) folds into the ABC transporter domain. 134–141 (GRNGSGKS) provides a ligand contact to ATP.

This sequence belongs to the ABC transporter superfamily. Ycf16 family. Component of a complex composed of SufB, SufC and SufD in a stoichiometric ratio of 1:2:1. Interacts with SufB. Interacts with SufD; the interaction enhances the ATPase activity of SufC. In terms of processing, proteolytically cleaved.

The protein resides in the plastid. It localises to the apicoplast. It carries out the reaction ATP + H2O = ADP + phosphate + H(+). Its pathway is cofactor biosynthesis; iron-sulfur cluster biosynthesis. In terms of biological role, participates in the sulfur mobilization (SUF) pathway for iron-sulfur (Fe-S) cluster biogenesis. As part of a complex consisting of SufB-SufC(2)-SufD, involved in assembly of [4Fe-4S] clusters. Exhibits ATPase activity. The sequence is that of Iron-sulfur cluster assembly protein SufC from Plasmodium falciparum (isolate 3D7).